The primary structure comprises 187 residues: Threonylcarbamoyl-AMP synthase (187 aa).

One can recognise a YrdC-like domain in the interval 4 to 187; sequence TLTLSEAVTA…DARSGHILRL (184 aa).

Belongs to the SUA5 family. TsaC subfamily.

It localises to the cytoplasm. It carries out the reaction L-threonine + hydrogencarbonate + ATP = L-threonylcarbamoyladenylate + diphosphate + H2O. In terms of biological role, required for the formation of a threonylcarbamoyl group on adenosine at position 37 (t(6)A37) in tRNAs that read codons beginning with adenine. Catalyzes the conversion of L-threonine, HCO(3)(-)/CO(2) and ATP to give threonylcarbamoyl-AMP (TC-AMP) as the acyladenylate intermediate, with the release of diphosphate. In Xylella fastidiosa (strain M23), this protein is Threonylcarbamoyl-AMP synthase.